The chain runs to 705 residues: Probable E3 ubiquitin-protein ligase MID2 (705 aa).

The segment at 30–80 adopts an RING-type zinc-finger fold; sequence CPICLELFEDPLLLPCAHSLCFSCAHRILVSSCSSGESIEPITAFQCPTCR. The B box-type 1; degenerate zinc finger occupies 137–184; that stretch reads IACQFCEQDPPRDAVKTCITCEVSYCDRCLRATHPNKKPFTSHRLVEP. A B box-type 2 zinc finger spans residues 190 to 232; it reads LRGITCLDHENEKVNMYCVSDDQLICALCKLVGRHRDHQVASL. Zn(2+) contacts are provided by cysteine 195, histidine 198, cysteine 218, and histidine 224. A coiled-coil region spans residues 233-301; the sequence is NDRFEKLKQT…IIQQRKQMIA (69 aa). In terms of domain architecture, COS spans 340-399; it reads LKENDQARFLQSAKNIAERVAMATASSQVLIPDINFNDAFENFALDFSREKKLLEGLDYL. In terms of domain architecture, Fibronectin type-III spans 404 to 504; sequence PPSIREELCT…EPTRLKTNSQ (101 aa). Residues 486 to 679 form the B30.2/SPRY domain; that stretch reads INQAGSRNSE…ILSGLPAPDF (194 aa).

The protein belongs to the TRIM/RBCC family. As to quaternary structure, homodimer or heterodimer with MID1. Interacts with IGBP1. Phosphorylated on serine and threonine residues. In terms of tissue distribution, low abundance in brain and lung, with even lower levels in heart, liver, and kidney.

It is found in the cytoplasm. Its subcellular location is the cytoskeleton. The catalysed reaction is S-ubiquitinyl-[E2 ubiquitin-conjugating enzyme]-L-cysteine + [acceptor protein]-L-lysine = [E2 ubiquitin-conjugating enzyme]-L-cysteine + N(6)-ubiquitinyl-[acceptor protein]-L-lysine.. The protein operates within protein modification; protein ubiquitination. Its function is as follows. E3 ubiquitin ligase that plays a role in microtubule stabilization. Mediates the 'Lys-48'-linked polyubiquitination of LRRK2 to drive its localization to microtubules and its proteasomal degradation in neurons. This ubiquitination inhibits LRRK2 kinase activation by RAB29. The polypeptide is Probable E3 ubiquitin-protein ligase MID2 (Mid2) (Mus musculus (Mouse)).